Reading from the N-terminus, the 432-residue chain is Serine hydroxymethyltransferase (432 aa).

Residues Leu127 and 131–133 (GHL) each bind (6S)-5,6,7,8-tetrahydrofolate. At Lys236 the chain carries N6-(pyridoxal phosphate)lysine.

The protein belongs to the SHMT family. As to quaternary structure, homodimer. The cofactor is pyridoxal 5'-phosphate.

Its subcellular location is the cytoplasm. The enzyme catalyses (6R)-5,10-methylene-5,6,7,8-tetrahydrofolate + glycine + H2O = (6S)-5,6,7,8-tetrahydrofolate + L-serine. Its pathway is one-carbon metabolism; tetrahydrofolate interconversion. It functions in the pathway amino-acid biosynthesis; glycine biosynthesis; glycine from L-serine: step 1/1. In terms of biological role, catalyzes the reversible interconversion of serine and glycine with tetrahydrofolate (THF) serving as the one-carbon carrier. This reaction serves as the major source of one-carbon groups required for the biosynthesis of purines, thymidylate, methionine, and other important biomolecules. Also exhibits THF-independent aldolase activity toward beta-hydroxyamino acids, producing glycine and aldehydes, via a retro-aldol mechanism. This is Serine hydroxymethyltransferase from Rhizobium etli (strain ATCC 51251 / DSM 11541 / JCM 21823 / NBRC 15573 / CFN 42).